Here is an 822-residue protein sequence, read N- to C-terminus: Myosin-D (822 aa).

A Myosin motor domain is found at 95–770; it reads LTYGDIGGLP…AAKMLVRLQR (676 aa). 189 to 196 contributes to the ATP binding site; it reads GESGAGKT. The actin-binding stretch occupies residues 660-670; it reads SHFIRCIKPND. The tract at residues 772 to 822 is tail; that stretch reads ALSAWEPLVGVFEGMTVLKRAKQLSTGRAVPATRICANVRRKLVQAGIKVC.

This sequence belongs to the TRAFAC class myosin-kinesin ATPase superfamily. Myosin family.

It localises to the cell membrane. The protein resides in the cytoplasm. Myosins are actin-based motor molecules with ATPase activity. Unconventional myosins serve in intracellular movements. Their highly divergent tails are presumed to bind to membranous compartments, which would be moved relative to actin filaments. The polypeptide is Myosin-D (Toxoplasma gondii).